Here is a 279-residue protein sequence, read N- to C-terminus: Methyltransferase prhM (279 aa).

Residues 124–125 (DI) and 152–153 (DV) contribute to the S-adenosyl-L-methionine site.

This sequence belongs to the class I-like SAM-binding methyltransferase superfamily.

The protein operates within secondary metabolite biosynthesis; terpenoid biosynthesis. In terms of biological role, methyltransferase; part of the gene cluster that mediates the biosynthesis of paraherquonin, a meroterpenoid with a unique, highly congested hexacyclic molecular architecture. The first step of the pathway is the synthesis of 3,5-dimethylorsellinic acid (DMOA) by the polyketide synthase prhL. Synthesis of DMOA is followed by farnesylation by the prenyltransferase prhE, methylesterification by the methyl-transferase prhM, epoxidation of the prenyl chain by the flavin-dependent monooxygenase prhF, and cyclization of the farnesyl moiety by the terpene cyclase prhH, to yield the tetracyclic intermediate, protoaustinoid A. The short chain dehydrogenase prhI then oxidizes the C-3 alcohol group of the terpene cyclase product to transform protoaustinoid A into protoaustinoid B. The FAD-binding monooxygenase prhJ catalyzes the oxidation of protoaustinoid B into preaustinoid A which is further oxidized into preaustinoid A1 by FAD-binding monooxygenase phrK. Finally, prhA leads to berkeleydione via the berkeleyone B intermediate. PrhA is a multifunctional dioxygenase that first desaturates at C5-C6 to form berkeleyone B, followed by rearrangement of the A/B-ring to form the cycloheptadiene moiety in berkeleydione. Berkeleydione serves as the key intermediate for the biosynthesis of paraherquonin as well as many other meroterpenoids. The cytochrome P450 monooxygenases prhB, prhD, and prhN, as well as the isomerase prhC, are probably involved in the late stage of paraherquonin biosynthesis, after the production of berkeleydione. Especially prhC might be a multifunctional enzyme that catalyzes the D-ring expansion via intramolecular methoxy rearrangement, as well as the hydrolysis of the expanded D-ring. The chain is Methyltransferase prhM from Penicillium brasilianum.